The chain runs to 119 residues: Large ribosomal subunit protein uL24 (119 aa).

Belongs to the universal ribosomal protein uL24 family. As to quaternary structure, part of the 50S ribosomal subunit.

One of two assembly initiator proteins, it binds directly to the 5'-end of the 23S rRNA, where it nucleates assembly of the 50S subunit. Its function is as follows. One of the proteins that surrounds the polypeptide exit tunnel on the outside of the subunit. This chain is Large ribosomal subunit protein uL24, found in Clavibacter michiganensis subsp. michiganensis (strain NCPPB 382).